A 216-amino-acid polypeptide reads, in one-letter code: Probable nicotinate-nucleotide adenylyltransferase (216 aa).

This sequence belongs to the NadD family.

It catalyses the reaction nicotinate beta-D-ribonucleotide + ATP + H(+) = deamido-NAD(+) + diphosphate. Its pathway is cofactor biosynthesis; NAD(+) biosynthesis; deamido-NAD(+) from nicotinate D-ribonucleotide: step 1/1. Functionally, catalyzes the reversible adenylation of nicotinate mononucleotide (NaMN) to nicotinic acid adenine dinucleotide (NaAD). This is Probable nicotinate-nucleotide adenylyltransferase from Maridesulfovibrio salexigens (strain ATCC 14822 / DSM 2638 / NCIMB 8403 / VKM B-1763) (Desulfovibrio salexigens).